The chain runs to 389 residues: (2R)-sulfolactate sulfo-lyase subunit beta (389 aa).

The protein belongs to the UxaA family. (2R)-sulfolactate sulfo-lyase is composed of a SuyA and a SuyB subunit.

It localises to the cytoplasm. The enzyme catalyses (2R)-3-sulfolactate = sulfite + pyruvate + H(+). Its function is as follows. Together with SuyA, desulfonates sulfolactate to pyruvate and sulfite. This Chromohalobacter salexigens (strain ATCC BAA-138 / DSM 3043 / CIP 106854 / NCIMB 13768 / 1H11) protein is (2R)-sulfolactate sulfo-lyase subunit beta (suyB).